A 535-amino-acid polypeptide reads, in one-letter code: Probable histone-arginine methyltransferase 1.3 (535 aa).

Met1 bears the N-acetylmethionine mark. An SAM-dependent MTase PRMT-type domain is found at 141–456; the sequence is EASSAKMYFH…QSYTIDLTLS (316 aa). Residues Gln158, Arg167, Gly191, Glu213, and Glu243 each coordinate S-adenosyl-L-methionine. Residues Glu257 and Glu266 contribute to the active site. Ser271 lines the S-adenosyl-L-methionine pocket. The segment at 494 to 517 is disordered; it reads VAQEPPLQPQPELSTQQDIQTPND. The span at 507-516 shows a compositional bias: polar residues; it reads STQQDIQTPN.

This sequence belongs to the class I-like SAM-binding methyltransferase superfamily. Protein arginine N-methyltransferase family. Interacts with PQT3 in the nucleus. Post-translationally, ubiquitinated by PQT3.

The protein localises to the nucleus. It localises to the cytoplasm. It catalyses the reaction L-arginyl-[protein] + 2 S-adenosyl-L-methionine = N(omega),N(omega)-dimethyl-L-arginyl-[protein] + 2 S-adenosyl-L-homocysteine + 2 H(+). In terms of biological role, methylates (mono- and asymmetric dimethylation) the guanidino nitrogens of arginyl residues in several proteins involved in DNA packaging, transcription regulation, and mRNA stability. Recruited to promoters upon gene activation, methylates histone H3 and activates transcription via chromatin remodeling. Positive regulator in the oxidative stress tolerance that promotes the expression of enzymes preventing oxidative stress such as APX1 and GPX1 by histone methylation (H3R17me2a). Confers tolerance to cadmium CdCl(2) and salt NaCl stresses. The chain is Probable histone-arginine methyltransferase 1.3 (PRMT13) from Arabidopsis thaliana (Mouse-ear cress).